The following is a 299-amino-acid chain: ATP phosphoribosyltransferase (299 aa).

Belongs to the ATP phosphoribosyltransferase family. Long subfamily. Mg(2+) is required as a cofactor.

It localises to the cytoplasm. The enzyme catalyses 1-(5-phospho-beta-D-ribosyl)-ATP + diphosphate = 5-phospho-alpha-D-ribose 1-diphosphate + ATP. Its pathway is amino-acid biosynthesis; L-histidine biosynthesis; L-histidine from 5-phospho-alpha-D-ribose 1-diphosphate: step 1/9. With respect to regulation, feedback inhibited by histidine. Catalyzes the condensation of ATP and 5-phosphoribose 1-diphosphate to form N'-(5'-phosphoribosyl)-ATP (PR-ATP). Has a crucial role in the pathway because the rate of histidine biosynthesis seems to be controlled primarily by regulation of HisG enzymatic activity. This chain is ATP phosphoribosyltransferase, found in Shewanella denitrificans (strain OS217 / ATCC BAA-1090 / DSM 15013).